Reading from the N-terminus, the 242-residue chain is MTTVSMREMLQAGVHFGHQTRYWNPKMKPFIFGARNGVHIINLEHTVPMFNEALAFISNVASKKGKVLFVGTKRAASEAIKEAAVSCDQFYVDHRWLGGMLTNWKTVRQSIKRLKDLESQSVDGTFDKLTKKEALMRTRELDKLEKSLGGIKNMAGLPDVIFVIGADHEHIAIKEANNLGIPVVAVVDTNSSPDGINYIIPGNDDAMRSIRLYTGSVAAAAKAGRGQDLAVQAEQDGFVEAE.

This sequence belongs to the universal ribosomal protein uS2 family.

The polypeptide is Small ribosomal subunit protein uS2 (Shewanella halifaxensis (strain HAW-EB4)).